The primary structure comprises 130 residues: Small ribosomal subunit protein uS9 (130 aa).

It belongs to the universal ribosomal protein uS9 family.

The polypeptide is Small ribosomal subunit protein uS9 (Blochmanniella floridana).